A 785-amino-acid polypeptide reads, in one-letter code: Phenylalanine--tRNA ligase beta subunit (785 aa).

The 113-residue stretch at 38–150 (CEHLKTFVIA…NTYNVGDTFF (113 aa)) folds into the tRNA-binding domain. The region spanning 394 to 470 (VDNIELNFFP…RLYGYDKICE (77 aa)) is the B5 domain. Residues D448, D454, E457, and E458 each contribute to the Mg(2+) site. The FDX-ACB domain maps to 690–783 (SCYQSVKRDF…VAEKLGGVLR (94 aa)).

It belongs to the phenylalanyl-tRNA synthetase beta subunit family. Type 1 subfamily. As to quaternary structure, tetramer of two alpha and two beta subunits. Mg(2+) is required as a cofactor.

Its subcellular location is the cytoplasm. It carries out the reaction tRNA(Phe) + L-phenylalanine + ATP = L-phenylalanyl-tRNA(Phe) + AMP + diphosphate + H(+). This is Phenylalanine--tRNA ligase beta subunit from Ehrlichia canis (strain Jake).